The following is a 576-amino-acid chain: MAGUK p55 subfamily member 7 (576 aa).

L27 domains follow at residues 10–65 (SDTG…KQSP) and 67–122 (PILH…YDPV). The region spanning 139 to 220 (IIRLVKNREP…AITFKIIPGS (82 aa)) is the PDZ domain. The SH3 domain maps to 228-298 (EGKMFIKALF…PSKHFQERRL (71 aa)). Residues 289-383 (PSKHFQERRL…VGPVGVGLNE (95 aa)) form a phospho-regulated basic and hydrophobic (PRBH) motif region. One can recognise a Guanylate kinase-like domain in the interval 368 to 560 (YRLVVLVGPV…AFNELKTTFD (193 aa)). A Phosphoserine modification is found at serine 409.

The protein belongs to the MAGUK family. In terms of assembly, heterodimer; able to heterodimerize via its C-terminal L27 domain with LIN7A, LIN7B and LIN7C. Forms a tripartite complex composed of DLG1, MPP7 and LIN7 (LIN7A or LIN7C). Interacts with DLG1 via its N-terminal L27 domain. Interacts with PALS1 and PATJ. Phosphorylated by aPKC which promotes dissociation from the cell cortex.

It is found in the membrane. The protein resides in the lateral cell membrane. The protein localises to the cell junction. Its subcellular location is the tight junction. It localises to the adherens junction. It is found in the cytoplasm. The protein resides in the cell cortex. In terms of biological role, acts as an important adapter that promotes epithelial cell polarity and tight junction formation via its interaction with DLG1. Involved in the assembly of protein complexes at sites of cell-cell contact. This is MAGUK p55 subfamily member 7 (MPP7) from Homo sapiens (Human).